Here is a 378-residue protein sequence, read N- to C-terminus: 23S rRNA (uracil(747)-C(5))-methyltransferase RlmC (378 aa).

[4Fe-4S] cluster contacts are provided by Cys-3, Cys-11, Cys-14, and Cys-87. Residues Gln-212, Phe-241, Glu-262, and Asn-309 each coordinate S-adenosyl-L-methionine. Residue Cys-336 is the Nucleophile of the active site.

Belongs to the class I-like SAM-binding methyltransferase superfamily. RNA M5U methyltransferase family. RlmC subfamily.

The enzyme catalyses uridine(747) in 23S rRNA + S-adenosyl-L-methionine = 5-methyluridine(747) in 23S rRNA + S-adenosyl-L-homocysteine + H(+). In terms of biological role, catalyzes the formation of 5-methyl-uridine at position 747 (m5U747) in 23S rRNA. In Shewanella halifaxensis (strain HAW-EB4), this protein is 23S rRNA (uracil(747)-C(5))-methyltransferase RlmC.